The sequence spans 798 residues: Protocadherin beta-14 (798 aa).

Residues 1–26 form the signal peptide; the sequence is MEIRGALDLRKRQVLIFLVLLGLSRA. Residues 27-686 lie on the Extracellular side of the membrane; that stretch reads GTESAHYSVA…APAQAQADSL (660 aa). 5 consecutive Cadherin domains span residues 35–133, 138–242, 247–347, 352–451, and 456–561; these read VAEE…SPTF, ILIK…APEF, YEVQ…PPEV, ITKR…APAF, and YTLF…SPFV. Cysteine 96 and cysteine 102 are joined by a disulfide. N-linked (GlcNAc...) asparagine glycosylation is present at asparagine 169. N-linked (GlcNAc...) asparagine glycosylation is found at asparagine 359, asparagine 418, and asparagine 436. Residue asparagine 567 is glycosylated (N-linked (GlcNAc...) asparagine). In terms of domain architecture, Cadherin 6 spans 568-671; sequence GSAPCTELVP…LVDGFSQPYL (104 aa). The chain crosses the membrane as a helical span at residues 687–711; that stretch reads TVYLVVALASVSSLFLFSVLLFVAV. Residues 712–798 lie on the Cytoplasmic side of the membrane; it reads RLCRRSRAAS…FRNSFGLNIQ (87 aa).

The protein localises to the cell membrane. Its function is as follows. Potential calcium-dependent cell-adhesion protein. May be involved in the establishment and maintenance of specific neuronal connections in the brain. The sequence is that of Protocadherin beta-14 (PCDHB14) from Pan troglodytes (Chimpanzee).